A 777-amino-acid chain; its full sequence is Phosphoribosylformylglycinamidine synthase subunit PurL (777 aa).

His50 is an active-site residue. ATP-binding residues include Tyr53 and Lys92. Residue Glu94 participates in Mg(2+) binding. Substrate is bound by residues 95 to 98 (SHNH) and Arg117. The active-site Proton acceptor is the His96. Asp118 serves as a coordination point for Mg(2+). Gln241 is a substrate binding site. Asp269 contacts Mg(2+). 313 to 315 (ESQ) is a substrate binding site. ATP contacts are provided by Asp520 and Gly557. Asn558 contacts Mg(2+). Residue Ser560 participates in substrate binding.

This sequence belongs to the FGAMS family. As to quaternary structure, monomer. Part of the FGAM synthase complex composed of 1 PurL, 1 PurQ and 2 PurS subunits.

The protein localises to the cytoplasm. The enzyme catalyses N(2)-formyl-N(1)-(5-phospho-beta-D-ribosyl)glycinamide + L-glutamine + ATP + H2O = 2-formamido-N(1)-(5-O-phospho-beta-D-ribosyl)acetamidine + L-glutamate + ADP + phosphate + H(+). The protein operates within purine metabolism; IMP biosynthesis via de novo pathway; 5-amino-1-(5-phospho-D-ribosyl)imidazole from N(2)-formyl-N(1)-(5-phospho-D-ribosyl)glycinamide: step 1/2. Its function is as follows. Part of the phosphoribosylformylglycinamidine synthase complex involved in the purines biosynthetic pathway. Catalyzes the ATP-dependent conversion of formylglycinamide ribonucleotide (FGAR) and glutamine to yield formylglycinamidine ribonucleotide (FGAM) and glutamate. The FGAM synthase complex is composed of three subunits. PurQ produces an ammonia molecule by converting glutamine to glutamate. PurL transfers the ammonia molecule to FGAR to form FGAM in an ATP-dependent manner. PurS interacts with PurQ and PurL and is thought to assist in the transfer of the ammonia molecule from PurQ to PurL. The sequence is that of Phosphoribosylformylglycinamidine synthase subunit PurL from Trichormus variabilis (strain ATCC 29413 / PCC 7937) (Anabaena variabilis).